The primary structure comprises 264 residues: Mannose-specific lectin CEA (264 aa).

The signal sequence occupies residues 1-23 (MAKLLLFLLPAILGLLVPRSAVA). Bulb-type lectin domains lie at 26–131 (TNYL…PWVP) and 145–252 (NNLL…PQAK). Beta-D-mannose contacts are provided by residues 51 to 55 (QDDCN), Tyr-59, Trp-63, Gln-64, 170 to 174 (QGDCN), Tyr-178, and 182 to 185 (YGWQ). The Carbohydrate-binding motif 1 signature appears at 51-59 (QDDCNLVLY). 2 cysteine pairs are disulfide-bonded: Cys-54-Cys-74 and Cys-173-Cys-195. Positions 170–178 (QGDCNLVLY) match the Carbohydrate-binding motif 2 motif.

In terms of assembly, forms heterotetramer of 2 chains 1 and 2 chains 2 arranged as a dimer of chain 1 and chain 2 heterodimers.

It is found in the secreted. Functionally, mannose-specific lectin. Shows agglutinating activity towards erythrocytes from rabbit. Has insecticidal activity against cotton aphids and other hemipteran insects. This Colocasia esculenta (Wild taro) protein is Mannose-specific lectin CEA.